Consider the following 426-residue polypeptide: Gamma-glutamyl phosphate reductase (426 aa).

It belongs to the gamma-glutamyl phosphate reductase family.

It is found in the cytoplasm. The catalysed reaction is L-glutamate 5-semialdehyde + phosphate + NADP(+) = L-glutamyl 5-phosphate + NADPH + H(+). Its pathway is amino-acid biosynthesis; L-proline biosynthesis; L-glutamate 5-semialdehyde from L-glutamate: step 2/2. In terms of biological role, catalyzes the NADPH-dependent reduction of L-glutamate 5-phosphate into L-glutamate 5-semialdehyde and phosphate. The product spontaneously undergoes cyclization to form 1-pyrroline-5-carboxylate. This is Gamma-glutamyl phosphate reductase from Sorangium cellulosum (strain So ce56) (Polyangium cellulosum (strain So ce56)).